The chain runs to 146 residues: Early E3 16 kDa glycoprotein (146 aa).

N-linked (GlcNAc...) asparagine; by host glycans are attached at residues N51 and N84.

E3 proteins seem to be dispensable for virus growth in tissue culture cells. They are potentially important for virus growth under special conditions; E3 region may help adenoviruses to evade the immune surveillance of the host. This chain is Early E3 16 kDa glycoprotein, found in Human adenovirus B serotype 3 (HAdV-3).